A 396-amino-acid polypeptide reads, in one-letter code: Elongation factor Tu (396 aa).

The 197-residue stretch at 10 to 206 (KPHVNVGTIG…ALDTYIPTPE (197 aa)) folds into the tr-type G domain. The tract at residues 19–26 (GHVDHGKT) is G1. 19–26 (GHVDHGKT) contributes to the GTP binding site. Threonine 26 contacts Mg(2+). The G2 stretch occupies residues 60–64 (GITIN). Residues 81–84 (DCPG) form a G3 region. GTP is bound by residues 81-85 (DCPGH) and 136-139 (NKCD). Residues 136 to 139 (NKCD) form a G4 region. The tract at residues 174–176 (SAK) is G5.

The protein belongs to the TRAFAC class translation factor GTPase superfamily. Classic translation factor GTPase family. EF-Tu/EF-1A subfamily. Monomer.

Its subcellular location is the cytoplasm. It catalyses the reaction GTP + H2O = GDP + phosphate + H(+). In terms of biological role, GTP hydrolase that promotes the GTP-dependent binding of aminoacyl-tRNA to the A-site of ribosomes during protein biosynthesis. The protein is Elongation factor Tu of Thiomonas delicata (Thiomonas cuprina).